A 617-amino-acid chain; its full sequence is Probable LRR receptor-like serine/threonine-protein kinase RKF3 (617 aa).

An N-terminal signal peptide occupies residues 1 to 20 (MLFLRRIAVVFFVFTSFSAA). The Extracellular segment spans residues 21–212 (QNSTCPLDFS…PTSSGANKVK (192 aa)). Asparagine 22, asparagine 124, asparagine 135, and asparagine 165 each carry an N-linked (GlcNAc...) asparagine glycan. Residues 213-233 (VLVSSFSVLLVASVLVITAWF) form a helical membrane-spanning segment. Over 234–617 (WYCRRKKSKL…DGPSGNTNTT (384 aa)) the chain is Cytoplasmic. Residues 283–563 (FSRHNIIGRG…VKMLESNEFT (281 aa)) form the Protein kinase domain. ATP contacts are provided by residues 289–297 (IGRGGYGNV) and lysine 311. The active-site Proton acceptor is aspartate 412. The interval 585–617 (VSSSSGSGKLTSPTGYQAFSFGGDGPSGNTNTT) is disordered.

It belongs to the protein kinase superfamily. Ser/Thr protein kinase family. As to expression, expressed in the whole plant at low levels.

The protein resides in the cell membrane. The enzyme catalyses L-seryl-[protein] + ATP = O-phospho-L-seryl-[protein] + ADP + H(+). It catalyses the reaction L-threonyl-[protein] + ATP = O-phospho-L-threonyl-[protein] + ADP + H(+). In Arabidopsis thaliana (Mouse-ear cress), this protein is Probable LRR receptor-like serine/threonine-protein kinase RKF3 (RKF3).